A 496-amino-acid chain; its full sequence is Ankyrin repeat domain-containing protein 34A (496 aa).

ANK repeat units lie at residues 4-33, 37-72, 76-106, and 110-139; these read TEGH…YVNE, QGET…DPNI, LGRT…DPSV, and AGAS…AKGT. An N5-methylglutamine modification is found at Q15. Composition is skewed to polar residues over residues 147-162 and 180-191; these read DTSP…YLNS and FCTSPSEIQLQT. The tract at residues 147 to 473 is disordered; sequence DTSPSGTKKT…TKRKLVRRHS (327 aa). Basic and acidic residues predominate over residues 204–214; the sequence is AQEEEEKRDVF. Pro residues predominate over residues 218 to 233; that stretch reads LPKPPDDPSPSEPLPK. The segment covering 234–243 has biased composition (basic residues); sequence PPRHPPKPLK. T316 carries the phosphothreonine modification. Over residues 463 to 473 the composition is skewed to basic residues; the sequence is RTKRKLVRRHS.

Belongs to the ANKRD34 family. In terms of processing, methylated at Gln-15 by N6AMT1.

The chain is Ankyrin repeat domain-containing protein 34A (ANKRD34A) from Homo sapiens (Human).